Consider the following 580-residue polypeptide: mRNA-decapping enzyme 1A (580 aa).

Phosphoserine is present on S62. The segment covering 132–141 (RSQQAARDKQ) has biased composition (basic and acidic residues). 3 disordered regions span residues 132-154 (RSQQAARDKQSPNQANGCSDHRP), 172-209 (QMGDSNISSPGLQPSTQISNLGSTETLEETPSGLQDKS), and 245-276 (LPGDASQKEPSSFLPFSFEPSGGGPQSENMGI). Phosphoserine occurs at positions 142, 179, and 180. A compositionally biased stretch (polar residues) spans 173 to 196 (MGDSNISSPGLQPSTQISNLGSTE). The segment covering 253–264 (EPSSFLPFSFEP) has biased composition (low complexity). Phosphoserine occurs at positions 319 and 334. Over residues 343–359 (QAVKTTPRQRSPLSSQP) the composition is skewed to polar residues. The interval 343-371 (QAVKTTPRQRSPLSSQPVPELSQASLAAS) is disordered. Residue T348 is modified to Phosphothreonine. S353 is subject to Phosphoserine. At R376 the chain carries Asymmetric dimethylarginine. At T401 the chain carries Phosphothreonine. Phosphoserine occurs at positions 422, 520, 521, and 523. The interval 510–533 (TRSSDLERKASSPSPLTVGTSENQ) is disordered. A compositionally biased stretch (polar residues) spans 520–531 (SSPSPLTVGTSE). Phosphothreonine occurs at positions 526 and 529.

This sequence belongs to the DCP1 family. As to quaternary structure, forms a complex with EDC3, DCP2, DDX6 and EDC4/HEDLS, within this complex directly interacts with EDC3. Part of a cytoplasmic complex containing proteins involved in mRNA decay, including XRN1 and LSM1. Interacts with DCP1B. Interacts with DCP2. Interacts with DDX17 in an RNA-independent manner. Interacts with PNRC2. Interacts with SMAD4. Interacts with UPF1. Interacts with ZC3HAV1. Interacts with ZFP36L1. Interacts with NBDY. Interacts with DHX34; the interaction is RNA-independent. Post-translationally, (Microbial infection) Cleaved by porcine reproductive and respiratory syndrome virus serine protease nsp4 after Glu-238. The cleavage inhibits DCP1A function.

The protein resides in the cytoplasm. Its subcellular location is the P-body. It is found in the nucleus. The catalysed reaction is a 5'-end (N(7)-methyl 5'-triphosphoguanosine)-ribonucleoside in mRNA + H2O = N(7)-methyl-GDP + a 5'-end phospho-ribonucleoside in mRNA + 2 H(+). Its function is as follows. Necessary for the degradation of mRNAs, both in normal mRNA turnover and in nonsense-mediated mRNA decay. Removes the 7-methyl guanine cap structure from mRNA molecules, yielding a 5'-phosphorylated mRNA fragment and 7m-GDP. Contributes to the transactivation of target genes after stimulation by TGFB1. Essential for embryonic development. The chain is mRNA-decapping enzyme 1A (DCP1A) from Sus scrofa (Pig).